The following is a 345-amino-acid chain: MSSKKRTKRNRAGDEYKEHKGRSHPRRKFLPPEEPDVSRISKVAGVNQLEELCDSFDQPLHSTAVDACGEEHSENESSGYVPAPQRTNAERSEKMLLETPEGDVHEFSQSGSVREPLMENLNAPNTTRSEVKKKRPSKKSSSDSSVNSPSSVQLWCPNKLKRSSRDITELDVVLAEFEKIAANYRQSIESKACRKAVSAFCSAFEDQVTDLITEVQELKNTKKKNAKVVADIKKKRQRLMQVREKLSRTEPQLIKLQKEYAEVEERRSSLRQVVQFLTDLKELQQDYLDYREENPRKKVVYGASSLPALLVESRRILQAERHFQNINRKLEYALEVQRGKLAKEH.

Composition is skewed to basic residues over residues 1 to 10 and 19 to 29; these read MSSKKRTKRN and HKGRSHPRRKF. Disordered stretches follow at residues 1-37 and 64-153; these read MSSKKRTKRNRAGDEYKEHKGRSHPRRKFLPPEEPDV and AVDA…SSVQ. The span at 88–106 shows a compositional bias: basic and acidic residues; the sequence is NAERSEKMLLETPEGDVHE. The segment covering 142 to 152 has biased composition (low complexity); the sequence is SDSSVNSPSSV. A coiled-coil region spans residues 201–294; that stretch reads CSAFEDQVTD…QDYLDYREEN (94 aa). Residues 222–239 carry the Nuclear localization signal motif; sequence KKKNAKVVADIKKKRQRL.

This sequence belongs to the CENP-U/AME1 family. Interacts with CENPH-CENPI complex at the kinetochore.

It localises to the nucleus. The protein resides in the chromosome. Its subcellular location is the centromere. Probable component of a centromeric complex involved in assembly of kinetochore proteins, mitotic progression and chromosome segregation. Required for maintenance of sister chromatid adhesion during mitotic checkpoint activation. The chain is Centromere protein U (CENPU) from Gallus gallus (Chicken).